Here is a 145-residue protein sequence, read N- to C-terminus: Large ribosomal subunit protein uL13 (145 aa).

Belongs to the universal ribosomal protein uL13 family. As to quaternary structure, part of the 50S ribosomal subunit.

Its function is as follows. This protein is one of the early assembly proteins of the 50S ribosomal subunit, although it is not seen to bind rRNA by itself. It is important during the early stages of 50S assembly. This chain is Large ribosomal subunit protein uL13, found in Listeria innocua serovar 6a (strain ATCC BAA-680 / CLIP 11262).